The chain runs to 425 residues: Histone-binding protein RBBP7 (425 aa).

Ala2 carries the N-acetylalanine modification. The residue at position 3 (Ser3) is a Phosphoserine. Lys4 bears the N6-acetyllysine; alternate mark. Lys4 participates in a covalent cross-link: Glycyl lysine isopeptide (Lys-Gly) (interchain with G-Cter in SUMO2); alternate. A Glycyl lysine isopeptide (Lys-Gly) (interchain with G-Cter in ubiquitin); alternate cross-link involves residue Lys4. Thr10 bears the Phosphothreonine mark. 7 WD repeats span residues 47-122 (QWLP…KINH), 128-173 (RARY…LRLR), 181-217 (GLSW…KIVD), 228-269 (VVED…HLVD), 275-312 (VNCL…LHTF), 318-369 (EIFQ…LFIH), and 376-403 (ISDF…IWQM). Ser95 is subject to Phosphoserine. Lys101 participates in a covalent cross-link: Glycyl lysine isopeptide (Lys-Gly) (interchain with G-Cter in SUMO2). Lys119 carries the N6-acetyllysine modification. Lys155 participates in a covalent cross-link: Glycyl lysine isopeptide (Lys-Gly) (interchain with G-Cter in SUMO2). N6-acetyllysine; alternate is present on Lys159. A Glycyl lysine isopeptide (Lys-Gly) (interchain with G-Cter in SUMO2); alternate cross-link involves residue Lys159. Ser354 bears the Phosphoserine mark.

It belongs to the WD repeat RBAP46/RBAP48/MSI1 family. Binds directly to helix 1 of the histone fold of histone H4, a region that is not accessible when H4 is in chromatin. Subunit of the type B histone acetyltransferase (HAT) complex, composed of RBBP7 and HAT1. Subunit of the core histone deacetylase (HDAC) complex, which is composed of HDAC1, HDAC2, RBBP4 and RBBP7. The core HDAC complex associates with SIN3A, ARID4B/SAP180, SAP18, SAP30, SAP130, SUDS3/SAP45 and possibly ARID4A/RBP1 and ING1 to form the SIN3 HDAC complex. Component of the nucleosome remodeling and deacetylase (NuRD) repressor complex, composed of core proteins MTA1, MTA2, MTA3, RBBP4, RBBP7, HDAC1, HDAC2, MBD2, MBD3, and peripherally associated proteins CDK2AP1, CDK2AP2, GATAD2A, GATAD2B, CHD3, CHD4 and CHD5. The exact stoichiometry of the NuRD complex is unknown, and some subunits such as MBD2 and MBD3, GATAD2A and GATAD2B, and CHD3, CHD4 and CHD5 define mutually exclusive NuRD complexes. The NuRD complex may interact with MBD3L1. The NuRD complex may interact with MBD3L2. Subunit of the PRC2/EED-EZH2 complex, which is composed of at least EED, EZH2, RBBP4, RBBP7 and SUZ12. The PRC2/EED-EZH2 complex may also associate with HDAC1. Component of the NURF-1 ISWI chromatin remodeling complex (also called the nucleosome-remodeling factor (NURF) complex) at least composed of SMARCA1, BPTF, RBBP4 and RBBP7. Within the complex interacts with SMARCA1. Component of the BPFT-SMARCA1 complex at least composed of SMARCA1, BPFT, RBBP4 and RBBP7; the complex is catalytically inactive and does not remodel chromatin. Within the complex interacts with SMARCA1. Interacts with BRCA1. Interacts with CDK2AP1. Interacts with CENPA. Interacts with CHD3. Interacts with CHD4. Interacts with CREBBP, and this interaction may be enhanced by the binding of phosphorylated CREB1 to CREBBP. Interacts with HDAC7. Interacts with MTA1. Interacts with PWWP2B. Interacts with RB1 (via viral protein-binding domain). Interacts with SUV39H1.

It localises to the nucleus. Core histone-binding subunit that may target chromatin remodeling factors, histone acetyltransferases and histone deacetylases to their histone substrates in a manner that is regulated by nucleosomal DNA. Component of several complexes which regulate chromatin metabolism. These include the type B histone acetyltransferase (HAT) complex, which is required for chromatin assembly following DNA replication; the core histone deacetylase (HDAC) complex, which promotes histone deacetylation and consequent transcriptional repression; the nucleosome remodeling and histone deacetylase complex (the NuRD complex), which promotes transcriptional repression by histone deacetylation and nucleosome remodeling; and the PRC2/EED-EZH2 complex, which promotes repression of homeotic genes during development; and the NURF (nucleosome remodeling factor) complex. This is Histone-binding protein RBBP7 (RBBP7) from Bos taurus (Bovine).